The sequence spans 307 residues: Ornithine carbamoyltransferase (307 aa).

Residues 53 to 56 (STRT), Gln-80, Arg-104, and 131 to 134 (HPCQ) each bind carbamoyl phosphate. Residues Asn-162, Asp-220, and 224–225 (SM) each bind L-ornithine. Residues 260–261 (CL) and Arg-288 contribute to the carbamoyl phosphate site.

This sequence belongs to the aspartate/ornithine carbamoyltransferase superfamily. OTCase family.

The protein localises to the cytoplasm. The enzyme catalyses carbamoyl phosphate + L-ornithine = L-citrulline + phosphate + H(+). The protein operates within amino-acid biosynthesis; L-arginine biosynthesis; L-arginine from L-ornithine and carbamoyl phosphate: step 1/3. Reversibly catalyzes the transfer of the carbamoyl group from carbamoyl phosphate (CP) to the N(epsilon) atom of ornithine (ORN) to produce L-citrulline. This chain is Ornithine carbamoyltransferase, found in Nitrosomonas eutropha (strain DSM 101675 / C91 / Nm57).